A 345-amino-acid polypeptide reads, in one-letter code: Membrane progestin receptor alpha (345 aa).

Topologically, residues 1-74 (MAMAVAQKFN…FQRHNEAVNV (74 aa)) are cytoplasmic. Residues 75–95 (WTHLLAALALLLRLIGLAASV) traverse the membrane as a helical segment. Topologically, residues 96 to 102 (DFREDPH) are extracellular. Residues 103-123 (ALPLFFIVLASFTYLSFSAVA) form a helical membrane-spanning segment. Over 124–136 (HLLQAKSEFWHYS) the chain is Cytoplasmic. A helical membrane pass occupies residues 137–157 (FFFLDYVGVAVYQFGSALAHF). Residues 158-168 (YYAIEPSWHDK) are Extracellular-facing. The helical transmembrane segment at 169 to 189 (VQAIFLPTAAFLAWLSCAGSC) threads the bilayer. The Cytoplasmic segment spans residues 190 to 243 (YNKYSQKPGLLGRIFQEAPSALAYVLDISPVLHRIIVSPLPAEEDPALLYHKCQ). A helical transmembrane segment spans residues 244-264 (VVFFLLAAAFFSTVMPESWFP). The Extracellular segment spans residues 265–268 (GSCH). A helical membrane pass occupies residues 269–289 (IFGQGHQVFHVFLVLCTLAQL). The Cytoplasmic segment spans residues 290-315 (EAVTLDYQARRGIYEPLHARWPHNFS). The chain crosses the membrane as a helical span at residues 316 to 336 (GLFLLTVASSSLTALLLSQLV). The Extracellular portion of the chain corresponds to 337 to 345 (RRKLHQKTK).

The protein belongs to the ADIPOR family. As to expression, detected in most adult tissues. Higher expression found in white fat and liver than brown fat and skeletal muscle.

It is found in the cell membrane. In terms of biological role, plasma membrane progesterone (P4) receptor coupled to G proteins. Seems to act through a G(i) mediated pathway. May be involved in oocyte maturation. Involved in neurosteroid inhibition of apoptosis. Also binds dehydroepiandrosterone (DHEA), pregnanolone, pregnenolone and allopregnanolone. This Mus musculus (Mouse) protein is Membrane progestin receptor alpha.